A 207-amino-acid chain; its full sequence is Small ribosomal subunit protein uS4A (207 aa).

In terms of domain architecture, S4 RNA-binding spans 98–161 (RRLDNVVYRM…REHKRIKELA (64 aa)).

This sequence belongs to the universal ribosomal protein uS4 family. Part of the 30S ribosomal subunit. Contacts protein S5. The interaction surface between S4 and S5 is involved in control of translational fidelity.

Functionally, one of the primary rRNA binding proteins, it binds directly to 16S rRNA where it nucleates assembly of the body of the 30S subunit. In terms of biological role, with S5 and S12 plays an important role in translational accuracy. The sequence is that of Small ribosomal subunit protein uS4A from Symbiobacterium thermophilum (strain DSM 24528 / JCM 14929 / IAM 14863 / T).